Reading from the N-terminus, the 377-residue chain is MQCAHYSAGHCHSCQWLEKPYSQQLEDKQQNLKQLLPQAIVKQWLPPIASQQDAFRNKAKMVVSGSVERPLLGMLHRDGTAVDLCHCPLYPAHFQPVFDVVKSFIACAGLTPYNVARKRGELKYLLLTESRHSGEMMLRFVLRSETKIAQLERALPRLHEQLPQLTVISANIQPIHMAILEGEKEILFTEQKAFKEQFNGIPLYIRPHSFFQTNPKMASELYATAGRWVRELKISSMWDLFCGVGGFGLHCADKNTCLTGIEISSEAIDCARDSAKTLGLENIEFQALDSTHFAVAKDQIPQLVLVNPPRRGIGKVLCDYLSKMVPDYILYSSCNAQTMAKDIAALANYRVEKTQLFDMFPHTEHYEVLTLLVLNHN.

Residues cysteine 3, cysteine 11, cysteine 14, and cysteine 87 each contribute to the [4Fe-4S] cluster site. Residues glutamine 212, phenylalanine 241, glutamate 262, and asparagine 307 each contribute to the S-adenosyl-L-methionine site. Catalysis depends on cysteine 334, which acts as the Nucleophile.

This sequence belongs to the class I-like SAM-binding methyltransferase superfamily. RNA M5U methyltransferase family. RlmC subfamily.

It catalyses the reaction uridine(747) in 23S rRNA + S-adenosyl-L-methionine = 5-methyluridine(747) in 23S rRNA + S-adenosyl-L-homocysteine + H(+). In terms of biological role, catalyzes the formation of 5-methyl-uridine at position 747 (m5U747) in 23S rRNA. This Photorhabdus laumondii subsp. laumondii (strain DSM 15139 / CIP 105565 / TT01) (Photorhabdus luminescens subsp. laumondii) protein is 23S rRNA (uracil(747)-C(5))-methyltransferase RlmC.